The primary structure comprises 290 residues: UPF0046 protein K07C11.7 (290 aa).

Positions 1–22 (MFHFSIGTVLISICWLAQWMEA) are cleaved as a signal peptide. A glycan (N-linked (GlcNAc...) asparagine) is linked at Asn204.

This sequence belongs to the UPF0046 family.

The polypeptide is UPF0046 protein K07C11.7 (Caenorhabditis elegans).